Consider the following 116-residue polypeptide: MSFCSFFGGEVFQNHFEPGVYVCAKCGYELFSSRSKYAHSSPWPAFTETIHADSVAKRPEHNRSEALKVSCGKCGNGLGHEFLNDGPKPGQSRFUIFSSSLKFVPKGKETSASQGH.

Residues Met-1–Lys-106 form the MsrB domain. 4 residues coordinate Zn(2+): Cys-23, Cys-26, Cys-71, and Cys-74. Sec-95 (nucleophile) is an active-site residue. A non-standard amino acid (selenocysteine) is located at residue Sec-95.

Belongs to the MsrB Met sulfoxide reductase family. Zn(2+) is required as a cofactor. Truncated MSRB1/SEPX1 proteins produced by failed UGA/Sec decoding are ubiquitinated by some Cul2-RING E3 ubiquitin-protein ligase complexes (containing either PRAME, PRAMF6, PRAMF9 or FEM1C as substrate-recognition component).

It localises to the cytoplasm. It is found in the nucleus. The protein localises to the cytoskeleton. It carries out the reaction L-methionyl-[protein] + [thioredoxin]-disulfide + H2O = L-methionyl-(R)-S-oxide-[protein] + [thioredoxin]-dithiol. It catalyses the reaction [thioredoxin]-disulfide + L-methionine + H2O = L-methionine (R)-S-oxide + [thioredoxin]-dithiol. Functionally, methionine-sulfoxide reductase that specifically reduces methionine (R)-sulfoxide back to methionine. While in many cases, methionine oxidation is the result of random oxidation following oxidative stress, methionine oxidation is also a post-translational modification that takes place on specific residue. Acts as a regulator of actin assembly by reducing methionine (R)-sulfoxide mediated by MICALs (MICAL1, MICAL2 or MICAL3) on actin, thereby promoting filament repolymerization. Plays a role in innate immunity by reducing oxidized actin, leading to actin repolymerization in macrophages. In Homo sapiens (Human), this protein is Methionine-R-sulfoxide reductase B1 (MSRB1).